The chain runs to 169 residues: Small ribosomal subunit protein uS13m (169 aa).

The disordered stretch occupies residues 149 to 169; the sequence is KKLQEKKNKEQKKSQKCKTKK. Positions 150-161 are enriched in basic and acidic residues; it reads KLQEKKNKEQKK.

The protein belongs to the universal ribosomal protein uS13 family. In terms of assembly, part of the small ribosomal subunit.

The protein localises to the mitochondrion. In terms of biological role, located at the top of the head of the small subunit, it contacts several helices of the small subunit rRNA. In Dictyostelium discoideum (Social amoeba), this protein is Small ribosomal subunit protein uS13m (mrps13).